The sequence spans 370 residues: Maturase K (370 aa).

This sequence belongs to the intron maturase 2 family. MatK subfamily.

Its subcellular location is the plastid. The protein localises to the chloroplast. In terms of biological role, usually encoded in the trnK tRNA gene intron. Probably assists in splicing its own and other chloroplast group II introns. The protein is Maturase K of Marchantia polymorpha (Common liverwort).